The primary structure comprises 311 residues: tRNA dimethylallyltransferase (311 aa).

10-17 is a binding site for ATP; it reads GPTASGKT. Substrate is bound at residue 12–17; it reads TASGKT. Interaction with substrate tRNA stretches follow at residues 35–38, 159–163, and 240–245; these read DSAL, QRINR, and RCVGYR.

It belongs to the IPP transferase family. In terms of assembly, monomer. It depends on Mg(2+) as a cofactor.

The catalysed reaction is adenosine(37) in tRNA + dimethylallyl diphosphate = N(6)-dimethylallyladenosine(37) in tRNA + diphosphate. Functionally, catalyzes the transfer of a dimethylallyl group onto the adenine at position 37 in tRNAs that read codons beginning with uridine, leading to the formation of N6-(dimethylallyl)adenosine (i(6)A). This Haemophilus influenzae (strain 86-028NP) protein is tRNA dimethylallyltransferase.